A 292-amino-acid polypeptide reads, in one-letter code: Ribosomal RNA small subunit methyltransferase A (292 aa).

Residues Asn46, Leu48, Gly73, Glu94, Asp118, and Asn136 each contribute to the S-adenosyl-L-methionine site.

The protein belongs to the class I-like SAM-binding methyltransferase superfamily. rRNA adenine N(6)-methyltransferase family. RsmA subfamily.

It is found in the cytoplasm. It catalyses the reaction adenosine(1518)/adenosine(1519) in 16S rRNA + 4 S-adenosyl-L-methionine = N(6)-dimethyladenosine(1518)/N(6)-dimethyladenosine(1519) in 16S rRNA + 4 S-adenosyl-L-homocysteine + 4 H(+). Its function is as follows. Specifically dimethylates two adjacent adenosines (A1518 and A1519) in the loop of a conserved hairpin near the 3'-end of 16S rRNA in the 30S particle. May play a critical role in biogenesis of 30S subunits. The chain is Ribosomal RNA small subunit methyltransferase A from Deinococcus radiodurans (strain ATCC 13939 / DSM 20539 / JCM 16871 / CCUG 27074 / LMG 4051 / NBRC 15346 / NCIMB 9279 / VKM B-1422 / R1).